A 142-amino-acid polypeptide reads, in one-letter code: Large ribosomal subunit protein uL11 (142 aa).

It belongs to the universal ribosomal protein uL11 family. Part of the ribosomal stalk of the 50S ribosomal subunit. Interacts with L10 and the large rRNA to form the base of the stalk. L10 forms an elongated spine to which L12 dimers bind in a sequential fashion forming a multimeric L10(L12)X complex. In terms of processing, one or more lysine residues are methylated.

Functionally, forms part of the ribosomal stalk which helps the ribosome interact with GTP-bound translation factors. This is Large ribosomal subunit protein uL11 from Leptospira interrogans serogroup Icterohaemorrhagiae serovar copenhageni (strain Fiocruz L1-130).